The following is a 136-amino-acid chain: Large ribosomal subunit protein uL16 (136 aa).

This sequence belongs to the universal ribosomal protein uL16 family. In terms of assembly, part of the 50S ribosomal subunit.

Its function is as follows. Binds 23S rRNA and is also seen to make contacts with the A and possibly P site tRNAs. The sequence is that of Large ribosomal subunit protein uL16 from Yersinia enterocolitica serotype O:8 / biotype 1B (strain NCTC 13174 / 8081).